We begin with the raw amino-acid sequence, 222 residues long: Phosphoribosylformylglycinamidine synthase subunit PurQ (222 aa).

A Glutamine amidotransferase type-1 domain is found at 3-222 (AAVVVFPGSN…RALAGALTPA (220 aa)). The active-site Nucleophile is the C86. Catalysis depends on residues H194 and E196.

In terms of assembly, part of the FGAM synthase complex composed of 1 PurL, 1 PurQ and 2 PurS subunits.

The protein resides in the cytoplasm. The catalysed reaction is N(2)-formyl-N(1)-(5-phospho-beta-D-ribosyl)glycinamide + L-glutamine + ATP + H2O = 2-formamido-N(1)-(5-O-phospho-beta-D-ribosyl)acetamidine + L-glutamate + ADP + phosphate + H(+). The enzyme catalyses L-glutamine + H2O = L-glutamate + NH4(+). The protein operates within purine metabolism; IMP biosynthesis via de novo pathway; 5-amino-1-(5-phospho-D-ribosyl)imidazole from N(2)-formyl-N(1)-(5-phospho-D-ribosyl)glycinamide: step 1/2. In terms of biological role, part of the phosphoribosylformylglycinamidine synthase complex involved in the purines biosynthetic pathway. Catalyzes the ATP-dependent conversion of formylglycinamide ribonucleotide (FGAR) and glutamine to yield formylglycinamidine ribonucleotide (FGAM) and glutamate. The FGAM synthase complex is composed of three subunits. PurQ produces an ammonia molecule by converting glutamine to glutamate. PurL transfers the ammonia molecule to FGAR to form FGAM in an ATP-dependent manner. PurS interacts with PurQ and PurL and is thought to assist in the transfer of the ammonia molecule from PurQ to PurL. The sequence is that of Phosphoribosylformylglycinamidine synthase subunit PurQ from Ruegeria pomeroyi (strain ATCC 700808 / DSM 15171 / DSS-3) (Silicibacter pomeroyi).